The chain runs to 469 residues: Putative dipeptidase SAB1611c (469 aa).

H84 provides a ligand contact to Zn(2+). D86 is a catalytic residue. A Zn(2+)-binding site is contributed by D115. Catalysis depends on E149, which acts as the Proton acceptor. E150, D173, and H440 together coordinate Zn(2+).

The protein belongs to the peptidase M20A family. Requires Zn(2+) as cofactor.

The chain is Putative dipeptidase SAB1611c from Staphylococcus aureus (strain bovine RF122 / ET3-1).